The primary structure comprises 227 residues: Nodulation protein W (227 aa).

The Response regulatory domain occupies 21–135; that stretch reads IVFVVEDDIS…ELLDAVVAAT (115 aa). Position 70 is a 4-aspartylphosphate (Asp-70). One can recognise an HTH luxR-type domain in the interval 151-216; that stretch reads LKSLFETLSP…DLIRMSETLG (66 aa). The segment at residues 175–194 is a DNA-binding region (H-T-H motif); it reads NKQVAAELGLAEITVKIYRG.

In terms of processing, phosphorylated by NodV.

It is found in the cytoplasm. Its function is as follows. Member of the two-component regulatory system NodV/NodW probably involved in the regulation of the transcription of genes involved in the nodulation process. This chain is Nodulation protein W (nodW), found in Bradyrhizobium diazoefficiens (strain JCM 10833 / BCRC 13528 / IAM 13628 / NBRC 14792 / USDA 110).